The primary structure comprises 476 residues: Sedoheptulokinase (476 aa).

The protein belongs to the FGGY kinase family.

The protein localises to the cytoplasm. The enzyme catalyses sedoheptulose + ATP = D-sedoheptulose 7-phosphate + ADP + H(+). Functionally, acts as a modulator of macrophage activation through control of glucose metabolism. The protein is Sedoheptulokinase (Shpk) of Mus musculus (Mouse).